The following is a 120-amino-acid chain: Chaperonin GroEL (120 aa).

23 to 27 (DGTTT) lines the ATP pocket.

Belongs to the chaperonin (HSP60) family. Forms a cylinder of 14 subunits composed of two heptameric rings stacked back-to-back. Interacts with the co-chaperonin GroES.

It localises to the cytoplasm. It carries out the reaction ATP + H2O + a folded polypeptide = ADP + phosphate + an unfolded polypeptide.. Its function is as follows. Together with its co-chaperonin GroES, plays an essential role in assisting protein folding. The GroEL-GroES system forms a nano-cage that allows encapsulation of the non-native substrate proteins and provides a physical environment optimized to promote and accelerate protein folding. The chain is Chaperonin GroEL from Mycobacterium malmoense.